We begin with the raw amino-acid sequence, 194 residues long: Glycerol-3-phosphate acyltransferase (194 aa).

Transmembrane regions (helical) follow at residues 7–27 (LLMATSIAYLLGSIMGAYWVC), 59–79 (LTLFWDAAKGAAAVCIAAMLG), 86–106 (GVTAVAAIVGHMLPAFHHFKG), 116–136 (AGLALAWQTTLALTLVWAAVV), and 157–177 (AWRLNPEHLALFLILSLFILI).

Belongs to the PlsY family. In terms of assembly, probably interacts with PlsX.

The protein resides in the cell inner membrane. The enzyme catalyses an acyl phosphate + sn-glycerol 3-phosphate = a 1-acyl-sn-glycero-3-phosphate + phosphate. It functions in the pathway lipid metabolism; phospholipid metabolism. Functionally, catalyzes the transfer of an acyl group from acyl-phosphate (acyl-PO(4)) to glycerol-3-phosphate (G3P) to form lysophosphatidic acid (LPA). This enzyme utilizes acyl-phosphate as fatty acyl donor, but not acyl-CoA or acyl-ACP. The chain is Glycerol-3-phosphate acyltransferase from Hahella chejuensis (strain KCTC 2396).